Reading from the N-terminus, the 504-residue chain is Acetylcholine receptor subunit epsilon (504 aa).

Positions 1–19 are cleaved as a signal peptide; the sequence is MESGVRILSLLILLHNSLA. The Extracellular segment spans residues 20-240; it reads SESEESRLIK…IVFNLIIQRK (221 aa). Asn-88 and Asn-161 each carry an N-linked (GlcNAc...) asparagine glycan. Cys-148 and Cys-162 are oxidised to a cystine. Residues 241 to 265 form a helical membrane-spanning segment; sequence PLFYIINIIVPCVLISFLVVLVYFL. Over 266-273 the chain is Cytoplasmic; sequence PAKAGGQK. Residues 274-292 traverse the membrane as a helical segment; it reads CTVSISVLLAQTVFLFLIA. The Extracellular portion of the chain corresponds to 293 to 307; that stretch reads QMVPETSLSVPLIGK. Residues 308-329 form a helical membrane-spanning segment; it reads YLMFVMFVSTLIVLSCVIVLNV. Residues 330–473 are Cytoplasmic-facing; sequence SLRSPSTHNL…WILIGKVLDV (144 aa). A helical transmembrane segment spans residues 474-497; sequence LCFWVALPLFVLGTLAIFLMGHFN. The Extracellular portion of the chain corresponds to 498–504; it reads TAPEHPF.

This sequence belongs to the ligand-gated ion channel (TC 1.A.9) family. Acetylcholine receptor (TC 1.A.9.1) subfamily. Epsilon/CHRNE sub-subfamily. Pentamer of two alpha chains, and one each of the beta, delta, and gamma (in immature muscle) or epsilon (in mature muscle) chains.

Its subcellular location is the postsynaptic cell membrane. The protein resides in the cell membrane. It carries out the reaction K(+)(in) = K(+)(out). The catalysed reaction is Na(+)(in) = Na(+)(out). Its function is as follows. After binding acetylcholine, the AChR responds by an extensive change in conformation that affects all subunits and leads to opening of an ion-conducting channel across the plasma membrane. The chain is Acetylcholine receptor subunit epsilon (chrne) from Xenopus laevis (African clawed frog).